The following is a 288-amino-acid chain: Syntaxin PEP12 (288 aa).

Over 1-268 (MSEDEFFGGD…RYQKRTSRWR (268 aa)) the chain is Cytoplasmic. Residues S2 and S23 each carry the phosphoserine modification. A t-SNARE coiled-coil homology domain is found at 195-257 (QNLIEQRDQE…QLASDELRKA (63 aa)). A helical; Anchor for type IV membrane protein transmembrane segment spans residues 269–288 (VYLLIVLLVMLLFIFLIMKL).

The protein belongs to the syntaxin family. Ubiquitinated.

The protein localises to the membrane. Its function is as follows. Plays a role in the sorting and targeting of vacuolar proteases. This chain is Syntaxin PEP12 (PEP12), found in Saccharomyces cerevisiae (strain ATCC 204508 / S288c) (Baker's yeast).